The primary structure comprises 432 residues: Peptidase B (432 aa).

Mn(2+)-binding residues include Lys196 and Asp201. Lys208 is a catalytic residue. Mn(2+) contacts are provided by Asp219, Asp278, and Glu280. The active site involves Arg282.

It belongs to the peptidase M17 family. In terms of assembly, homohexamer. The cofactor is Mn(2+).

Its subcellular location is the cytoplasm. It carries out the reaction Release of an N-terminal amino acid, Xaa, from a peptide or arylamide. Xaa is preferably Glu or Asp but may be other amino acids, including Leu, Met, His, Cys and Gln.. In terms of biological role, probably plays an important role in intracellular peptide degradation. This Yersinia pseudotuberculosis serotype O:1b (strain IP 31758) protein is Peptidase B.